The chain runs to 459 residues: Ribulose bisphosphate carboxylase large chain (459 aa).

Residues N98 and T148 each coordinate substrate. K150 acts as the Proton acceptor in catalysis. K152 is a substrate binding site. Positions 176, 178, and 179 each coordinate Mg(2+). Position 176 is an N6-carboxylysine (K176). The active-site Proton acceptor is H268. Residues R269, H301, and S353 each coordinate substrate.

This sequence belongs to the RuBisCO large chain family. Type I subfamily. As to quaternary structure, heterohexadecamer of 8 large chains and 8 small chains. It depends on Mg(2+) as a cofactor.

It localises to the plastid. Its subcellular location is the chloroplast. The enzyme catalyses 2 (2R)-3-phosphoglycerate + 2 H(+) = D-ribulose 1,5-bisphosphate + CO2 + H2O. It catalyses the reaction D-ribulose 1,5-bisphosphate + O2 = 2-phosphoglycolate + (2R)-3-phosphoglycerate + 2 H(+). Functionally, ruBisCO catalyzes two reactions: the carboxylation of D-ribulose 1,5-bisphosphate, the primary event in carbon dioxide fixation, as well as the oxidative fragmentation of the pentose substrate in the photorespiration process. Both reactions occur simultaneously and in competition at the same active site. In Calyptrosphaera sphaeroidea, this protein is Ribulose bisphosphate carboxylase large chain (rbcL).